The primary structure comprises 291 residues: ATP synthase gamma chain (291 aa).

This sequence belongs to the ATPase gamma chain family. In terms of assembly, F-type ATPases have 2 components, CF(1) - the catalytic core - and CF(0) - the membrane proton channel. CF(1) has five subunits: alpha(3), beta(3), gamma(1), delta(1), epsilon(1). CF(0) has three main subunits: a, b and c.

The protein localises to the cell inner membrane. Functionally, produces ATP from ADP in the presence of a proton gradient across the membrane. The gamma chain is believed to be important in regulating ATPase activity and the flow of protons through the CF(0) complex. The chain is ATP synthase gamma chain from Pelagibacter ubique (strain HTCC1062).